The sequence spans 123 residues: PCNA-associated factor (123 aa).

The tract at residues 1–123 (MVRTKADCAG…SEEAADSGDE (123 aa)) is disordered. The D-box signature appears at 26–37 (RKTFGSSSSGSN). A PIP-box motif is present at residues 66–77 (QKGIGDFFGSPS). Residues 83 to 85 (KEN) carry the KEN box motif. The Initiation motif signature appears at 93–105 (EAGGSGAGKKPRK). Acidic residues predominate over residues 113–123 (PSEEAADSGDE).

In terms of assembly, interacts with pcna.

Its subcellular location is the nucleus. The protein resides in the cytoplasm. The protein localises to the perinuclear region. Its function is as follows. PCNA-binding protein that acts as a regulator of DNA repair during DNA replication. Following DNA damage, the interaction with pcna is disrupted, facilitating the interaction between monoubiquitinated pcna and the translesion DNA synthesis DNA polymerase eta (polh) at stalled replisomes, facilitating the bypass of replication-fork-blocking lesions. Also acts as a regulator of centrosome number. In Xenopus laevis (African clawed frog), this protein is PCNA-associated factor.